We begin with the raw amino-acid sequence, 94 residues long: Sec-independent protein translocase protein TatA (94 aa).

A helical membrane pass occupies residues 1 to 21; that stretch reads MFGRLGAPEIILILVVIILLF. Positions 44-94 are disordered; sequence AKAMKSEGQESTPAGPPNTDEQPPAQRTIQAAPGDVTSSRPVSEPTDTTKR. Polar residues predominate over residues 62-72; the sequence is TDEQPPAQRTI.

This sequence belongs to the TatA/E family. The Tat system comprises two distinct complexes: a TatABC complex, containing multiple copies of TatA, TatB and TatC subunits, and a separate TatA complex, containing only TatA subunits. Substrates initially bind to the TatABC complex, which probably triggers association of the separate TatA complex to form the active translocon.

It is found in the cell membrane. Part of the twin-arginine translocation (Tat) system that transports large folded proteins containing a characteristic twin-arginine motif in their signal peptide across membranes. TatA could form the protein-conducting channel of the Tat system. This chain is Sec-independent protein translocase protein TatA, found in Streptomyces avermitilis (strain ATCC 31267 / DSM 46492 / JCM 5070 / NBRC 14893 / NCIMB 12804 / NRRL 8165 / MA-4680).